We begin with the raw amino-acid sequence, 368 residues long: Phosphate acyltransferase (368 aa).

Belongs to the PlsX family. Homodimer. Probably interacts with PlsY.

The protein resides in the cytoplasm. It catalyses the reaction a fatty acyl-[ACP] + phosphate = an acyl phosphate + holo-[ACP]. The protein operates within lipid metabolism; phospholipid metabolism. Functionally, catalyzes the reversible formation of acyl-phosphate (acyl-PO(4)) from acyl-[acyl-carrier-protein] (acyl-ACP). This enzyme utilizes acyl-ACP as fatty acyl donor, but not acyl-CoA. The sequence is that of Phosphate acyltransferase from Methylibium petroleiphilum (strain ATCC BAA-1232 / LMG 22953 / PM1).